Consider the following 96-residue polypeptide: Protein RnfH (96 aa).

Belongs to the UPF0125 (RnfH) family.

The sequence is that of Protein RnfH from Hahella chejuensis (strain KCTC 2396).